We begin with the raw amino-acid sequence, 389 residues long: E3 ubiquitin-protein ligase E3D (389 aa).

At Ala-2 the chain carries N-acetylalanine. Residues 129–159 carry the BRAT1-like motif motif; it reads PLPSENWGALVGEWCCHPDPFANKSLHPQEN. A Zn(2+)-binding site is contributed by Cys-144. An interaction with UBE2C region spans residues 235 to 257; that stretch reads QSSERSFPIIPRSWFVQSVIAQC. The interval 353–389 is HECT-like; sequence LPSATCLELLLILSKSNANLPSSLRRVNSFQVAFLKM.

As to quaternary structure, interacts with UBE2C/UbcH10 (E2 ubiquitin-conjugating enzyme). In vitro, interacts with cyclin-B. In terms of processing, ubiquitinated by UBCH10 (E2 ubiquitin-conjugating enzyme).

Its subcellular location is the cytoplasm. It carries out the reaction S-ubiquitinyl-[E2 ubiquitin-conjugating enzyme]-L-cysteine + [acceptor protein]-L-lysine = [E2 ubiquitin-conjugating enzyme]-L-cysteine + N(6)-ubiquitinyl-[acceptor protein]-L-lysine.. Its pathway is protein modification; protein ubiquitination. E3 ubiquitin-protein ligase which accepts ubiquitin from specific E2 ubiquitin-conjugating enzymes, and transfers it to substrates, generally promoting their degradation by the proteasome. Independently of its E3 ubiquitin-protein ligase activity, acts as an inhibitor of CPSF3 endonuclease activity by blocking CPSF3 active site. In Homo sapiens (Human), this protein is E3 ubiquitin-protein ligase E3D (UBE3D).